The chain runs to 191 residues: Casparian strip membrane protein 4 (191 aa).

The Cytoplasmic segment spans residues 1-27 (MKTGSVEAGEQASEDATPRRGKKLNRG). Residues 28–48 (ILILDLVLRVFGAICTLGSAV) traverse the membrane as a helical segment. The Extracellular segment spans residues 49–72 (AMGTTSQTLPSSSQFFRFRAKYND). A helical transmembrane segment spans residues 73–93 (LPMFMFFAIANSIVCAYLVLS). Over 94–110 (LRLSIFHIIRSAGIITR) the chain is Cytoplasmic. A helical transmembrane segment spans residues 111–131 (IILVTFDMVMLVLLTCGASAA). The Extracellular portion of the chain corresponds to 132-160 (TSIVYLAHKGNASANWLPFCVRFSHFCNR). Asn142 carries N-linked (GlcNAc...) asparagine glycosylation. Residues 161 to 181 (ISGSLIGSFFSIIIFMLLVIL) form a helical membrane-spanning segment. At 182 to 191 (SAVSQFSICN) the chain is on the cytoplasmic side.

The protein belongs to the Casparian strip membrane proteins (CASP) family. Homodimer and heterodimers.

It localises to the cell membrane. Regulates membrane-cell wall junctions and localized cell wall deposition. Required for establishment of the Casparian strip membrane domain (CSD) and the subsequent formation of Casparian strips, a cell wall modification of the root endodermis that determines an apoplastic barrier between the intraorganismal apoplasm and the extraorganismal apoplasm and prevents lateral diffusion. The protein is Casparian strip membrane protein 4 of Ricinus communis (Castor bean).